The following is a 382-amino-acid chain: Polyadenylate-binding protein 5 (382 aa).

RRM domains lie at 18-96, 106-182, 199-276, and 302-378; these read AALY…WSQP, GNIF…RFKF, TNVF…RAQK, and VPIY…LGQA.

It is found in the cytoplasm. Its function is as follows. Binds the poly(A) tail of mRNA. May be involved in cytoplasmic regulatory processes of mRNA metabolism. Can probably bind to cytoplasmic RNA sequences other than poly(A) in vivo. In Gorilla gorilla gorilla (Western lowland gorilla), this protein is Polyadenylate-binding protein 5 (PABPC5).